The primary structure comprises 511 residues: 2-isopropylmalate synthase (511 aa).

Positions 5–267 (LIIFDTTLRD…DTDINATHIL (263 aa)) constitute a Pyruvate carboxyltransferase domain. Aspartate 14, histidine 202, histidine 204, and asparagine 238 together coordinate Mn(2+). The segment at 392 to 511 (KLVSLKVCTE…ATNKAQHPQI (120 aa)) is regulatory domain.

The protein belongs to the alpha-IPM synthase/homocitrate synthase family. LeuA type 1 subfamily. As to quaternary structure, homodimer. Mn(2+) serves as cofactor.

The protein localises to the cytoplasm. The catalysed reaction is 3-methyl-2-oxobutanoate + acetyl-CoA + H2O = (2S)-2-isopropylmalate + CoA + H(+). Its pathway is amino-acid biosynthesis; L-leucine biosynthesis; L-leucine from 3-methyl-2-oxobutanoate: step 1/4. Catalyzes the condensation of the acetyl group of acetyl-CoA with 3-methyl-2-oxobutanoate (2-ketoisovalerate) to form 3-carboxy-3-hydroxy-4-methylpentanoate (2-isopropylmalate). This chain is 2-isopropylmalate synthase, found in Ruthia magnifica subsp. Calyptogena magnifica.